An 847-amino-acid chain; its full sequence is Alanine--tRNA ligase (847 aa).

The Zn(2+) site is built by His554, His558, Cys656, and His660.

This sequence belongs to the class-II aminoacyl-tRNA synthetase family. The cofactor is Zn(2+).

The protein resides in the cytoplasm. It catalyses the reaction tRNA(Ala) + L-alanine + ATP = L-alanyl-tRNA(Ala) + AMP + diphosphate. Its function is as follows. Catalyzes the attachment of alanine to tRNA(Ala) in a two-step reaction: alanine is first activated by ATP to form Ala-AMP and then transferred to the acceptor end of tRNA(Ala). Also edits incorrectly charged Ser-tRNA(Ala) and Gly-tRNA(Ala) via its editing domain. The sequence is that of Alanine--tRNA ligase from Helicobacter pylori (strain HPAG1).